Here is a 206-residue protein sequence, read N- to C-terminus: 2,3-bisphosphoglycerate-dependent phosphoglycerate mutase (206 aa).

Substrate is bound by residues 9–16 (RHGQSEWN), 22–23 (TG), Arg61, 88–91 (ERDY), Lys99, 115–116 (RR), and 159–160 (GN). The active-site Tele-phosphohistidine intermediate is the His10. Glu88 functions as the Proton donor/acceptor in the catalytic mechanism.

This sequence belongs to the phosphoglycerate mutase family. BPG-dependent PGAM subfamily. As to quaternary structure, homodimer.

The catalysed reaction is (2R)-2-phosphoglycerate = (2R)-3-phosphoglycerate. The protein operates within carbohydrate degradation; glycolysis; pyruvate from D-glyceraldehyde 3-phosphate: step 3/5. Catalyzes the interconversion of 2-phosphoglycerate and 3-phosphoglycerate. The chain is 2,3-bisphosphoglycerate-dependent phosphoglycerate mutase from Methylocella silvestris (strain DSM 15510 / CIP 108128 / LMG 27833 / NCIMB 13906 / BL2).